The following is a 322-amino-acid chain: Beta-ketoacyl-[acyl-carrier-protein] synthase III (322 aa).

Active-site residues include Cys113 and His249. Residues 250–254 (QANLR) form an ACP-binding region. Residue Asn279 is part of the active site.

Belongs to the thiolase-like superfamily. FabH family. In terms of assembly, homodimer.

Its subcellular location is the cytoplasm. It catalyses the reaction malonyl-[ACP] + acetyl-CoA + H(+) = 3-oxobutanoyl-[ACP] + CO2 + CoA. Its pathway is lipid metabolism; fatty acid biosynthesis. Catalyzes the condensation reaction of fatty acid synthesis by the addition to an acyl acceptor of two carbons from malonyl-ACP. Catalyzes the first condensation reaction which initiates fatty acid synthesis and may therefore play a role in governing the total rate of fatty acid production. Possesses both acetoacetyl-ACP synthase and acetyl transacylase activities. Its substrate specificity determines the biosynthesis of branched-chain and/or straight-chain of fatty acids. The chain is Beta-ketoacyl-[acyl-carrier-protein] synthase III from Granulibacter bethesdensis (strain ATCC BAA-1260 / CGDNIH1).